The chain runs to 544 residues: MYTDEVRTPQALKSRYFTNLGDLNCRTRRNSATGNSSVASAATPTNGGKQNTKCSPQMSTLVCTPPPKRFHKIRNPFEGALADRLHLPLIASPSLFRARTPQLSSTQFEWNIDEVSQLTPADVEPHETQFHDSPDPELESKAQMAISAFFKESLIVPSPVDCPLRKNRIILNADHTPISNKSSSGRRGRDCSVQTELTLPPILPKALEEALRPYLQPHLAGGTSGRFKSRSSGSDVFNSSMRRKLFDLHNVIVLGEKEAVQSPQMVGSSPQGKQTMFAGRLSDSASGEGSFGSLSPIRNLCGLPLGTPDDGNRSSKRKLLLINELEFPSPIAPPEHLSRRLVHSKVEASISSNEQHDTLSELTGTGRPACRFTPDRSSSPMQALEHSDSSINQRVSRLRVNSTRQLPSQSFLETVDQALFEEVEADDTDEPEADQESDEDEEEAEAMQLSTISFNCSSSNSDTPRGHRRHRSANRKNLSQSFSANLEEVEAQRVKTAPPVINPPAQRIGLYRVDSGFNETSIISTFACSQDISMACCSTPSTRP.

Disordered stretches follow at residues 28 to 55, 348 to 391, and 422 to 480; these read RRNS…TKCS, ASIS…DSSI, and EVEA…NLSQ. Residues 30-55 are compositionally biased toward polar residues; it reads NSATGNSSVASAATPTNGGKQNTKCS. Positions 422–445 are enriched in acidic residues; the sequence is EVEADDTDEPEADQESDEDEEEAE. Residues 450–461 are compositionally biased toward low complexity; that stretch reads STISFNCSSSNS.

This sequence belongs to the BORA family. Interacts with aur. Post-translationally, phosphorylated by aur.

It localises to the cytoplasm. The protein resides in the nucleus. Its function is as follows. Required for the activation of Aurora-A (aur) at the onset of mitosis. The protein is Protein aurora borealis (bora) of Drosophila pseudoobscura pseudoobscura (Fruit fly).